The sequence spans 122 residues: Large ribosomal subunit protein uL14c (122 aa).

Belongs to the universal ribosomal protein uL14 family. Part of the 50S ribosomal subunit.

It is found in the plastid. It localises to the chloroplast. In terms of biological role, binds to 23S rRNA. This chain is Large ribosomal subunit protein uL14c, found in Chloranthus spicatus (Chulantree).